A 237-amino-acid polypeptide reads, in one-letter code: Ribosomal RNA small subunit methyltransferase G (237 aa).

S-adenosyl-L-methionine is bound by residues Gly-76, Phe-81, 128–129, and Arg-147; that span reads IE.

The protein belongs to the methyltransferase superfamily. RNA methyltransferase RsmG family.

The protein localises to the cytoplasm. Functionally, specifically methylates the N7 position of a guanine in 16S rRNA. This is Ribosomal RNA small subunit methyltransferase G from Prochlorococcus marinus (strain MIT 9301).